We begin with the raw amino-acid sequence, 80 residues long: WAP four-disulfide core domain protein 15A (80 aa).

A signal peptide spans 1–20 (MKPSSLLLFTTTILLCLSMA). The region spanning 29-76 (VTPKQGYCPEFLLDCPFVLLPVCSRDKGCKGTKKCCFYYCQMRCVEPW) is the WAP domain. Intrachain disulfides connect cysteine 36–cysteine 64, cysteine 43–cysteine 68, cysteine 51–cysteine 63, and cysteine 57–cysteine 72.

It is found in the secreted. Its function is as follows. Antibacterial protein. This chain is WAP four-disulfide core domain protein 15A, found in Mus musculus (Mouse).